The primary structure comprises 129 residues: Putative transmembrane protein 10 (129 aa).

Helical transmembrane passes span 3-23 (NFSY…AFAG), 27-47 (LLVG…LSSL), and 85-105 (SSVL…FFVF).

It is found in the host membrane. In Sulfolobus islandicus filamentous virus (isolate Iceland/Hveragerdi) (SIFV), this protein is Putative transmembrane protein 10 (SIFV0010).